The following is a 491-amino-acid chain: 3-octaprenyl-4-hydroxybenzoate carboxy-lyase (491 aa).

Asn-176 is a Mn(2+) binding site. Residues 179 to 181 (IYR), 193 to 195 (RWL), and 198 to 199 (RG) contribute to the prenylated FMN site. Glu-242 is a binding site for Mn(2+). Catalysis depends on Asp-291, which acts as the Proton donor.

This sequence belongs to the UbiD family. In terms of assembly, homohexamer. Prenylated FMN is required as a cofactor. It depends on Mn(2+) as a cofactor.

Its subcellular location is the cell membrane. It carries out the reaction a 4-hydroxy-3-(all-trans-polyprenyl)benzoate + H(+) = a 2-(all-trans-polyprenyl)phenol + CO2. It functions in the pathway cofactor biosynthesis; ubiquinone biosynthesis. Functionally, catalyzes the decarboxylation of 3-octaprenyl-4-hydroxy benzoate to 2-octaprenylphenol, an intermediate step in ubiquinone biosynthesis. The polypeptide is 3-octaprenyl-4-hydroxybenzoate carboxy-lyase (Chromobacterium violaceum (strain ATCC 12472 / DSM 30191 / JCM 1249 / CCUG 213 / NBRC 12614 / NCIMB 9131 / NCTC 9757 / MK)).